Here is a 294-residue protein sequence, read N- to C-terminus: RNA polymerase sigma-K factor (294 aa).

A propeptide spanning residues 1–20 is cleaved from the precursor; that stretch reads MVTGVFAALGFVVKELVFLV. Positions 1-156 are encoded by spoIVCB; sequence MVTGVFAALG…VNNCFFIFKS (156 aa). A Polymerase core binding motif is present at residues 79–92; it reads DLISIGTIGLIKGI. Residues 114 to 165 form a not present in recombined mature factor region; sequence EIVITKGGCIHPSLIRFNIYGVRIHNGNFFHDKVNNCFFIFKSMPPLFVMNN. The tract at residues 157-294 is encoded by spoIIIC; the sequence is MPPLFVMNNE…KEKRKKAKGK (138 aa). The segment at residues 251-270 is a DNA-binding region (H-T-H motif); the sequence is QREIAKELGISRSYVSRIEK.

It belongs to the sigma-70 factor family.

In terms of biological role, sigma factors are initiation factors that promote the attachment of RNA polymerase to specific initiation sites and are then released. This sigma factor is responsible for the expression of sporulation specific genes in the mother cell. The protein is RNA polymerase sigma-K factor (sigK) of Bacillus subtilis (strain 168).